The chain runs to 367 residues: GTP cyclohydrolase FolE2 (367 aa).

It belongs to the GTP cyclohydrolase IV family.

It catalyses the reaction GTP + H2O = 7,8-dihydroneopterin 3'-triphosphate + formate + H(+). It functions in the pathway cofactor biosynthesis; 7,8-dihydroneopterin triphosphate biosynthesis; 7,8-dihydroneopterin triphosphate from GTP: step 1/1. Functionally, converts GTP to 7,8-dihydroneopterin triphosphate. This chain is GTP cyclohydrolase FolE2, found in Ruegeria sp. (strain TM1040) (Silicibacter sp.).